Consider the following 630-residue polypeptide: Cytochrome B pre-mRNA-processing protein 2 (630 aa).

The protein resides in the mitochondrion. Appears to be specifically required for the splicing of the terminal intron (bI5) of the cytochrome b pre-mRNA. Can also stimulates the splicing of the omega intron of the precursor of large ribosomal RNA. This Saccharomyces paradoxus (Yeast) protein is Cytochrome B pre-mRNA-processing protein 2 (CBP2).